The sequence spans 154 residues: Histone H2B type F-M (154 aa).

Low complexity predominate over residues 1 to 18 (MAAASAMAEASSETTSEE). Residues 1-61 (MAAASAMAEA…RGDSFGDSFT (61 aa)) form a disordered region. The segment covering 34–50 (QKQKRRGCRGSRRRHAN) has biased composition (basic residues).

The protein belongs to the histone H2B family. In terms of assembly, the nucleosome is a histone octamer containing two molecules each of H2A, H2B, H3 and H4 assembled in one H3-H4 heterotetramer and two H2A-H2B heterodimers. The octamer wraps approximately 147 bp of DNA.

It is found in the nucleus. The protein resides in the chromosome. In terms of biological role, core component of nucleosome. Nucleosomes wrap and compact DNA into chromatin, limiting DNA accessibility to the cellular machineries which require DNA as a template. Histones thereby play a central role in transcription regulation, DNA repair, DNA replication and chromosomal stability. DNA accessibility is regulated via a complex set of post-translational modifications of histones, also called histone code, and nucleosome remodeling. The chain is Histone H2B type F-M from Homo sapiens (Human).